The chain runs to 239 residues: Heptaprenylglyceryl phosphate synthase (239 aa).

Sn-glycerol 1-phosphate is bound at residue Lys12. Positions 14 and 40 each coordinate Mg(2+). Sn-glycerol 1-phosphate contacts are provided by residues 159–164, Gly189, and 209–210; these read YLEYSG and GN.

Belongs to the GGGP/HepGP synthase family. Group I subfamily. In terms of assembly, homodimer. Mg(2+) is required as a cofactor.

It carries out the reaction sn-glycerol 1-phosphate + all-trans-heptaprenyl diphosphate = 3-heptaprenyl-sn-glycero-1-phosphate + diphosphate. The protein operates within membrane lipid metabolism; glycerophospholipid metabolism. In terms of biological role, prenyltransferase that catalyzes in vivo the transfer of the heptaprenyl moiety of heptaprenyl pyrophosphate (HepPP; 35 carbon atoms) to the C3 hydroxyl of sn-glycerol-1-phosphate (G1P), producing heptaprenylglyceryl phosphate (HepGP). This reaction is an ether-bond-formation step in the biosynthesis of archaea-type G1P-based membrane lipids found in Bacillales. The sequence is that of Heptaprenylglyceryl phosphate synthase from Geobacillus thermodenitrificans (strain NG80-2).